A 248-amino-acid polypeptide reads, in one-letter code: Myelin protein P0 (248 aa).

The first 29 residues, 1–29 (MAPGAPSSSPSPILAALLFSSLVLSPALA), serve as a signal peptide directing secretion. The 114-residue stretch at 30-143 (IVVYTDREIY…DIVGKTSQVT (114 aa)) folds into the Ig-like V-type domain. The Extracellular segment spans residues 30 to 153 (IVVYTDREIY…LYVFEKVPTR (124 aa)). A disulfide bond links cysteine 50 and cysteine 127. Asparagine 122 carries an N-linked (GlcNAc...) (complex) asparagine glycan. The helical transmembrane segment at 154-179 (YGVVLGAVIGGILGVVLLLLLLFYLI) threads the bilayer. The Cytoplasmic portion of the chain corresponds to 180–248 (RYCWLRRQAA…GLGESRKDKK (69 aa)). Phosphoserine; by PKC is present on serine 210. Positions 222 to 248 (MLDHSRSTKAASEKKSKGLGESRKDKK) are disordered. Residues 224-248 (DHSRSTKAASEKKSKGLGESRKDKK) show a composition bias toward basic and acidic residues. Serine 226 and serine 228 each carry phosphoserine. Phosphoserine; by PKC is present on serine 233. Serine 237 and serine 243 each carry phosphoserine.

Belongs to the myelin P0 protein family. In terms of assembly, homodimer and homotetramer. N-glycosylated; contains sulfate-substituted glycan. As to expression, found only in peripheral nervous system Schwann cells.

Its subcellular location is the cell membrane. Is an adhesion molecule necessary for normal myelination in the peripheral nervous system. It mediates adhesion between adjacent myelin wraps and ultimately drives myelin compaction. The chain is Myelin protein P0 (Mpz) from Mus musculus (Mouse).